The chain runs to 41 residues: Photosystem I reaction center subunit IX (41 aa).

Residues 7–27 traverse the membrane as a helical segment; it reads YLSTAPVVAFAWLTFTAGFII.

Belongs to the PsaJ family.

Its subcellular location is the plastid. The protein resides in the chloroplast thylakoid membrane. May help in the organization of the PsaE and PsaF subunits. The sequence is that of Photosystem I reaction center subunit IX from Stigeoclonium helveticum (Green alga).